The sequence spans 235 residues: Large ribosomal subunit protein uL1 (235 aa).

This sequence belongs to the universal ribosomal protein uL1 family. In terms of assembly, part of the 50S ribosomal subunit.

In terms of biological role, binds directly to 23S rRNA. The L1 stalk is quite mobile in the ribosome, and is involved in E site tRNA release. Functionally, protein L1 is also a translational repressor protein, it controls the translation of the L11 operon by binding to its mRNA. This chain is Large ribosomal subunit protein uL1, found in Methylibium petroleiphilum (strain ATCC BAA-1232 / LMG 22953 / PM1).